The chain runs to 141 residues: Nucleoside diphosphate kinase (141 aa).

Lys-11, Phe-59, Arg-87, Thr-93, Arg-104, and Asn-114 together coordinate ATP. Residue His-117 is the Pros-phosphohistidine intermediate of the active site.

Belongs to the NDK family. In terms of assembly, homotetramer. It depends on Mg(2+) as a cofactor.

It is found in the cytoplasm. It catalyses the reaction a 2'-deoxyribonucleoside 5'-diphosphate + ATP = a 2'-deoxyribonucleoside 5'-triphosphate + ADP. The catalysed reaction is a ribonucleoside 5'-diphosphate + ATP = a ribonucleoside 5'-triphosphate + ADP. Major role in the synthesis of nucleoside triphosphates other than ATP. The ATP gamma phosphate is transferred to the NDP beta phosphate via a ping-pong mechanism, using a phosphorylated active-site intermediate. The sequence is that of Nucleoside diphosphate kinase from Halorhodospira halophila (strain DSM 244 / SL1) (Ectothiorhodospira halophila (strain DSM 244 / SL1)).